The sequence spans 151 residues: UPF0756 membrane protein Dred_1097 (151 aa).

The next 4 membrane-spanning stretches (helical) occupy residues 6–26, 52–72, 75–95, and 111–131; these read IILL…LATA, VGLI…NIVY, LVMK…TLAT, and LIFG…GIPI.

It belongs to the UPF0756 family.

It localises to the cell membrane. The chain is UPF0756 membrane protein Dred_1097 from Desulforamulus reducens (strain ATCC BAA-1160 / DSM 100696 / MI-1) (Desulfotomaculum reducens).